A 535-amino-acid chain; its full sequence is NAD(P)H-quinone oxidoreductase chain 4 2 (535 aa).

14 consecutive transmembrane segments (helical) span residues 9-29, 51-71, 106-126, 130-150, 152-172, 184-204, 227-247, 258-278, 290-310, 326-346, 347-367, 399-419, 432-452, and 479-499; these read FPWL…IPLI, WFAL…FYVG, LILL…PVTL, LFYF…AVQD, LLFF…LSIW, FILY…AMAF, LLLY…FPLH, TAPV…YALM, LYFA…AALT, ISHM…GMSG, AMLQ…LVGA, LASL…VFIG, LVVV…LLSM, and VFII…PKLV.

It belongs to the complex I subunit 4 family.

It is found in the cellular thylakoid membrane. It carries out the reaction a plastoquinone + NADH + (n+1) H(+)(in) = a plastoquinol + NAD(+) + n H(+)(out). The catalysed reaction is a plastoquinone + NADPH + (n+1) H(+)(in) = a plastoquinol + NADP(+) + n H(+)(out). NDH-1 shuttles electrons from NAD(P)H, via FMN and iron-sulfur (Fe-S) centers, to quinones in the respiratory chain. The immediate electron acceptor for the enzyme in this species is believed to be plastoquinone. Couples the redox reaction to proton translocation (for every two electrons transferred, four hydrogen ions are translocated across the cytoplasmic membrane), and thus conserves the redox energy in a proton gradient. This Synechococcus sp. (strain JA-3-3Ab) (Cyanobacteria bacterium Yellowstone A-Prime) protein is NAD(P)H-quinone oxidoreductase chain 4 2.